Consider the following 191-residue polypeptide: Crossover junction endodeoxyribonuclease RuvC (191 aa).

Active-site residues include Asp7, Glu67, and Asp140. Mg(2+)-binding residues include Asp7, Glu67, and Asp140.

The protein belongs to the RuvC family. Homodimer which binds Holliday junction (HJ) DNA. The HJ becomes 2-fold symmetrical on binding to RuvC with unstacked arms; it has a different conformation from HJ DNA in complex with RuvA. In the full resolvosome a probable DNA-RuvA(4)-RuvB(12)-RuvC(2) complex forms which resolves the HJ. Requires Mg(2+) as cofactor.

It is found in the cytoplasm. The enzyme catalyses Endonucleolytic cleavage at a junction such as a reciprocal single-stranded crossover between two homologous DNA duplexes (Holliday junction).. Its function is as follows. The RuvA-RuvB-RuvC complex processes Holliday junction (HJ) DNA during genetic recombination and DNA repair. Endonuclease that resolves HJ intermediates. Cleaves cruciform DNA by making single-stranded nicks across the HJ at symmetrical positions within the homologous arms, yielding a 5'-phosphate and a 3'-hydroxyl group; requires a central core of homology in the junction. The consensus cleavage sequence is 5'-(A/T)TT(C/G)-3'. Cleavage occurs on the 3'-side of the TT dinucleotide at the point of strand exchange. HJ branch migration catalyzed by RuvA-RuvB allows RuvC to scan DNA until it finds its consensus sequence, where it cleaves and resolves the cruciform DNA. This chain is Crossover junction endodeoxyribonuclease RuvC, found in Pelodictyon phaeoclathratiforme (strain DSM 5477 / BU-1).